Here is a 51-residue protein sequence, read N- to C-terminus: NLWQFGMMIQHTTRENPLFKYFSYGCYCGWGGGGPLDATDRCCFVHDCCYG.

3 residues coordinate Ca(2+): Tyr27, Gly29, and Gly31. A disulfide bond links Cys28 and Cys43. His46 is a catalytic residue. Asp47 lines the Ca(2+) pocket.

The protein belongs to the phospholipase A2 family. Group II subfamily. D49 sub-subfamily. Ca(2+) serves as cofactor. Expressed by the venom gland.

The protein resides in the secreted. It catalyses the reaction a 1,2-diacyl-sn-glycero-3-phosphocholine + H2O = a 1-acyl-sn-glycero-3-phosphocholine + a fatty acid + H(+). Its function is as follows. Snake venom phospholipase A2 (PLA2) that impairs hemostasis. PLA2 catalyzes the calcium-dependent hydrolysis of the 2-acyl groups in 3-sn-phosphoglycerides. The polypeptide is Basic phospholipase A2 Bfon11 (Bothrops fonsecai (Fonseca's lancehead)).